A 137-amino-acid polypeptide reads, in one-letter code: uncharacterized protein (137 aa).

The first 21 residues, 1–21, serve as a signal peptide directing secretion; sequence MFNRRVLFLSVFSCAVFMLSG. A lipid anchor (N-palmitoyl cysteine) is attached at Cys22. Cys22 carries S-diacylglycerol cysteine lipidation.

It is found in the membrane. This is an uncharacterized protein from Escherichia coli (strain K12).